A 233-amino-acid chain; its full sequence is Purine nucleoside phosphorylase DeoD-type (233 aa).

Position 4 (His-4) interacts with a purine D-ribonucleoside. Residues Gly-20, Arg-24, Arg-43, and 87 to 90 each bind phosphate; that span reads RVGT. Residues Glu-162, 179 to 181, and 203 to 204 each bind a purine D-ribonucleoside; these read EME and SD. The active-site Proton donor is Asp-204.

This sequence belongs to the PNP/UDP phosphorylase family. In terms of assembly, homohexamer; trimer of homodimers.

The enzyme catalyses a purine D-ribonucleoside + phosphate = a purine nucleobase + alpha-D-ribose 1-phosphate. It catalyses the reaction a purine 2'-deoxy-D-ribonucleoside + phosphate = a purine nucleobase + 2-deoxy-alpha-D-ribose 1-phosphate. Functionally, catalyzes the reversible phosphorolytic breakdown of the N-glycosidic bond in the beta-(deoxy)ribonucleoside molecules, with the formation of the corresponding free purine bases and pentose-1-phosphate. In Alkaliphilus metalliredigens (strain QYMF), this protein is Purine nucleoside phosphorylase DeoD-type.